A 322-amino-acid chain; its full sequence is F-actin-capping protein subunit beta (322 aa).

Belongs to the F-actin-capping protein beta subunit family. Component of the F-actin capping complex, composed of a heterodimer of an alpha and a beta subunit.

The protein resides in the cytoplasm. The protein localises to the cytoskeleton. Its subcellular location is the actin patch. Its function is as follows. F-actin-capping proteins bind in a Ca(2+)-independent manner to the fast growing ends of actin filaments (barbed end) thereby blocking the exchange of subunits at these ends. Unlike other capping proteins (such as gelsolin and severin), these proteins do not sever actin filaments. The polypeptide is F-actin-capping protein subunit beta (cap2) (Aspergillus fumigatus (strain ATCC MYA-4609 / CBS 101355 / FGSC A1100 / Af293) (Neosartorya fumigata)).